A 307-amino-acid polypeptide reads, in one-letter code: DDRGK domain-containing protein 1 (307 aa).

The Lumenal segment spans residues 1–2 (MD). The chain crosses the membrane as a helical span at residues 3–23 (LILLVGIATALLLILITLYFL). The Cytoplasmic portion of the chain corresponds to 24–307 (QSKNAKTETK…TPVAAGESSA (284 aa)). Residues 31–175 (ETKAAAQPQR…EADRLAKEER (145 aa)) are disordered. Low complexity predominate over residues 52-83 (RRAQIARNQRNRLRQNQNAPAVAAAAAPAAAV). Residues 107 to 175 (LDEKMGAKKR…EADRLAKEER (69 aa)) are compositionally biased toward basic and acidic residues.

It belongs to the DDRGK1 family. Interacts with Atg9; the interaction is transient.

Its subcellular location is the endoplasmic reticulum membrane. Functionally, substrate adapter for ufmylation, the covalent attachment of the ubiquitin-like modifier UFM1 to substrate proteins. Required for ufmylation of Atg9; protects the nervous system during aging, possibly by stabilizing Atg9 and supporting its function. The protein is DDRGK domain-containing protein 1 of Drosophila virilis (Fruit fly).